Consider the following 296-residue polypeptide: Small ribosomal subunit biogenesis GTPase RsgA (296 aa).

The region spanning 65-223 is the CP-type G domain; sequence INRIGRPAVA…LADTPGFSSI (159 aa). Residues 114-117 and 166-174 each bind GTP; these read SKAD and GQSGAGKST. 4 residues coordinate Zn(2+): cysteine 247, cysteine 252, histidine 254, and cysteine 260.

This sequence belongs to the TRAFAC class YlqF/YawG GTPase family. RsgA subfamily. As to quaternary structure, monomer. Associates with 30S ribosomal subunit, binds 16S rRNA. Requires Zn(2+) as cofactor.

It is found in the cytoplasm. One of several proteins that assist in the late maturation steps of the functional core of the 30S ribosomal subunit. Helps release RbfA from mature subunits. May play a role in the assembly of ribosomal proteins into the subunit. Circularly permuted GTPase that catalyzes slow GTP hydrolysis, GTPase activity is stimulated by the 30S ribosomal subunit. In Lactobacillus acidophilus (strain ATCC 700396 / NCK56 / N2 / NCFM), this protein is Small ribosomal subunit biogenesis GTPase RsgA.